A 259-amino-acid chain; its full sequence is Haloacid dehalogenase-like hydrolase domain-containing protein 2 (259 aa).

Mg(2+)-binding residues include Asp13 and Ser15. Substrate contacts are provided by residues 13 to 15 (DLS) and 46 to 47 (TN). The stretch at 49 to 71 (TKESKRDLLERLRKLEFDISEEE) forms a coiled coil. At Lys50 the chain carries N6-succinyllysine. Lys179 serves as a coordination point for substrate. Asp204 is a binding site for Mg(2+).

This sequence belongs to the HAD-like hydrolase superfamily. Requires Mg(2+) as cofactor.

The polypeptide is Haloacid dehalogenase-like hydrolase domain-containing protein 2 (Hdhd2) (Rattus norvegicus (Rat)).